A 239-amino-acid chain; its full sequence is tRNA (guanine-N(7)-)-methyltransferase (239 aa).

Residues Glu-69, Glu-94, Asp-121, and Asp-144 each coordinate S-adenosyl-L-methionine. The active site involves Asp-144. Position 148 (Lys-148) interacts with substrate. An interaction with RNA region spans residues 150 to 155 (RHNKRR). Substrate is bound by residues Asp-180 and 217–220 (TKFE).

It belongs to the class I-like SAM-binding methyltransferase superfamily. TrmB family. As to quaternary structure, monomer.

The enzyme catalyses guanosine(46) in tRNA + S-adenosyl-L-methionine = N(7)-methylguanosine(46) in tRNA + S-adenosyl-L-homocysteine. Its pathway is tRNA modification; N(7)-methylguanine-tRNA biosynthesis. In terms of biological role, catalyzes the formation of N(7)-methylguanine at position 46 (m7G46) in tRNA. The protein is tRNA (guanine-N(7)-)-methyltransferase of Yersinia pseudotuberculosis serotype O:1b (strain IP 31758).